The chain runs to 286 residues: Putative sensory transducer protein YfmS (286 aa).

Residues 68–286 enclose the Methyl-accepting transducer domain; it reads ITDAIRSNQK…KMAEKALEEE (219 aa).

Belongs to the methyl-accepting chemotaxis (MCP) protein family.

Functionally, chemotactic-signal transducers respond to changes in the concentration of attractants and repellents in the environment, transduce a signal from the outside to the inside of the cell, and facilitate sensory adaptation through the variation of the level of methylation. Attractants increase the level of methylation while repellents decrease the level of methylation. The protein is Putative sensory transducer protein YfmS (yfmS) of Bacillus subtilis (strain 168).